Consider the following 365-residue polypeptide: Sulfotransferase 2B1 (365 aa).

70 to 75 lines the 3'-phosphoadenylyl sulfate pocket; the sequence is KSGTTW. Substrate is bound by residues W98, W103, and H125. H125 (proton acceptor) is an active-site residue. 3'-phosphoadenylyl sulfate-binding positions include R147, S155, Y210, 244 to 249, and 274 to 276; these read STFSAM and RKG. A disordered region spans residues 303-365; sequence GMPTFPWDED…ASETPHPRPS (63 aa). A compositionally biased stretch (acidic residues) spans 309-325; the sequence is WDEDPEEDGSPDPEPSP. S348 is modified (phosphoserine).

Belongs to the sulfotransferase 1 family. In terms of processing, phosphorylated. As to expression, expressed in the stratum granulosum-stratum corneum junction in the skin (at protein level). Expressed highly in placenta, prostate and trachea and lower expression in the small intestine and lung.

It localises to the cytoplasm. It is found in the cytosol. Its subcellular location is the microsome. The protein localises to the nucleus. The enzyme catalyses an alcohol + 3'-phosphoadenylyl sulfate = an alkyl sulfate + adenosine 3',5'-bisphosphate + H(+). It carries out the reaction 3beta-hydroxyandrost-5-en-17-one + 3'-phosphoadenylyl sulfate = dehydroepiandrosterone 3-sulfate + adenosine 3',5'-bisphosphate + H(+). It catalyses the reaction (24S)-hydroxycholesterol + 3'-phosphoadenylyl sulfate = (24S)-hydroxycholesterol 3-sulfate + adenosine 3',5'-bisphosphate + H(+). The catalysed reaction is cholesterol + 3'-phosphoadenylyl sulfate = cholesterol sulfate + adenosine 3',5'-bisphosphate + H(+). The enzyme catalyses pregnenolone + 3'-phosphoadenylyl sulfate = pregnenolone sulfate + adenosine 3',5'-bisphosphate + H(+). Functionally, sulfotransferase that utilizes 3'-phospho-5'-adenylyl sulfate (PAPS) as sulfonate donor to catalyze the sulfate conjugation. Responsible for the sulfation of cholesterol. Catalyzes sulfation of the 3beta-hydroxyl groups of steroids, such as, pregnenolone and dehydroepiandrosterone (DHEA). Preferentially sulfonates cholesterol, while it also has significant activity with pregnenolone and DHEA. Plays a role in epidermal cholesterol metabolism and in the regulation of epidermal proliferation and differentiation. Sulfonates pregnenolone but not cholesterol. This is Sulfotransferase 2B1 (SULT2B1) from Homo sapiens (Human).